The sequence spans 240 residues: Keratinocyte-associated protein 3 (240 aa).

The next 4 helical transmembrane spans lie at 21 to 41, 63 to 83, 95 to 115, and 163 to 183; these read VGLALILVGHVNLLVGAVLHG, VISVGSGLLSVSVGLVALLAS, LLTLALVNLLLSAACSMGLLL, and ALALWIPSLFMSAAEAALSGY.

This sequence belongs to the TMEM54 family.

The protein resides in the membrane. This Mus musculus (Mouse) protein is Keratinocyte-associated protein 3 (Krtcap3).